Here is an 83-residue protein sequence, read N- to C-terminus: Weak neurotoxin WNTX33 (83 aa).

The first 21 residues, 1–21, serve as a signal peptide directing secretion; it reads MKTLLLTLVVVTIVCLDLGYS. 4 disulfide bridges follow: cysteine 24–cysteine 45, cysteine 38–cysteine 62, cysteine 64–cysteine 75, and cysteine 76–cysteine 81.

Belongs to the three-finger toxin family. Short-chain subfamily. As to expression, expressed by the venom gland.

It localises to the secreted. The polypeptide is Weak neurotoxin WNTX33 (Ophiophagus hannah (King cobra)).